We begin with the raw amino-acid sequence, 443 residues long: Serine/threonine-protein phosphatase 2A 55 kDa regulatory subunit B beta isoform (443 aa).

7 WD repeats span residues 22-61, 87-128, 171-209, 220-260, 279-317, 334-375, and 410-443; these read TEADIISTVEFNPTGELLATGDKGGRVVVFQREQESKSQP, EIEE…KRPE, AHTYHINSISVNSDYETYMSTDDLRINLWNLEITNRSFN, ELTE…LCDN, EIISSISDVKFSHSGRYLMTRDYLTVKVWDINMESKPLE, ENDC…DVTL, and DFSKKILHTAWHPNENIIAVAATNNLYIFQDKVN.

Belongs to the phosphatase 2A regulatory subunit B family. As to quaternary structure, PP2A consists of a common heterodimeric core enzyme, composed of a 36 kDa catalytic subunit (subunit C) and a 65 kDa constant regulatory subunit (PR65 or subunit A), that associates with a variety of regulatory subunits.

The protein localises to the cytoplasm. Its subcellular location is the cytoskeleton. It is found in the membrane. In terms of biological role, the B regulatory subunit might modulate substrate selectivity and catalytic activity, and might also direct the localization of the catalytic enzyme to a particular subcellular compartment. The sequence is that of Serine/threonine-protein phosphatase 2A 55 kDa regulatory subunit B beta isoform (ppp2r2b) from Carassius auratus (Goldfish).